We begin with the raw amino-acid sequence, 519 residues long: Cytochrome P450 52-E3 (519 aa).

A helical membrane pass occupies residues 10-30; the sequence is VLGGISVSFLLAYQAIYFYFI. Cys-461 lines the heme pocket.

The protein belongs to the cytochrome P450 family. It depends on heme as a cofactor.

It is found in the membrane. It catalyses the reaction an omega-methyl-long-chain fatty acid + reduced [NADPH--hemoprotein reductase] + O2 = an omega-hydroxy-long-chain fatty acid + oxidized [NADPH--hemoprotein reductase] + H2O + H(+). It carries out the reaction (9Z)-octadecenoate + reduced [NADPH--hemoprotein reductase] + O2 = 18-hydroxy-(9Z)-octadecenoate + oxidized [NADPH--hemoprotein reductase] + H2O + H(+). The catalysed reaction is hexadecanoate + reduced [NADPH--hemoprotein reductase] + O2 = 16-hydroxyhexadecanoate + oxidized [NADPH--hemoprotein reductase] + H2O + H(+). The enzyme catalyses (9Z)-hexadecenoate + reduced [NADPH--hemoprotein reductase] + O2 = (9Z)-16-hydroxyhexadec-9-enoate + oxidized [NADPH--hemoprotein reductase] + H2O + H(+). Functionally, catalyzes the terminal (at the omega-position) hydroxylation of a fatty acid. Probably involved in alkane metabolism. Has minor activity toward myristic acid, palmitic acid, palmitoleic acid and oleic acid. This chain is Cytochrome P450 52-E3, found in Starmerella bombicola (Yeast).